A 742-amino-acid chain; its full sequence is 5-methyltetrahydropteroyltriglutamate--homocysteine methyltransferase (742 aa).

5-methyltetrahydropteroyltri-L-glutamate-binding positions include 18-21 (REWK) and Lys112. L-homocysteine contacts are provided by residues 420 to 422 (IGS) and Glu473. L-methionine is bound by residues 420–422 (IGS) and Glu473. Trp550 provides a ligand contact to 5-methyltetrahydropteroyltri-L-glutamate. Asp588 is an L-homocysteine binding site. Asp588 contributes to the L-methionine binding site. Glu594 is a 5-methyltetrahydropteroyltri-L-glutamate binding site. Zn(2+) contacts are provided by His630, Cys632, and Glu654. Catalysis depends on His683, which acts as the Proton donor. Cys715 contacts Zn(2+).

Belongs to the vitamin-B12 independent methionine synthase family. It depends on Zn(2+) as a cofactor.

The catalysed reaction is 5-methyltetrahydropteroyltri-L-glutamate + L-homocysteine = tetrahydropteroyltri-L-glutamate + L-methionine. The protein operates within amino-acid biosynthesis; L-methionine biosynthesis via de novo pathway; L-methionine from L-homocysteine (MetE route): step 1/1. Catalyzes the transfer of a methyl group from 5-methyltetrahydrofolate to homocysteine resulting in methionine formation. This is 5-methyltetrahydropteroyltriglutamate--homocysteine methyltransferase from Staphylococcus aureus (strain bovine RF122 / ET3-1).